Reading from the N-terminus, the 428-residue chain is Putative G-protein coupled receptor F59B2.13 (428 aa).

Residues 1–30 (MSNNTTIPSKTATDICLTDRQMSLSVSSTE) lie on the Extracellular side of the membrane. N-linked (GlcNAc...) asparagine glycans are attached at residues asparagine 3 and asparagine 4. A helical transmembrane segment spans residues 31 to 51 (GVLIGTIIPILVLFGISGNIL). Topologically, residues 52 to 67 (NLTVLLAPNLRTRSNQ) are cytoplasmic. Residues 68 to 88 (LLACLAVADIVSLVVILPHSM) form a helical membrane-spanning segment. At 89–110 (AHYETFETALWFRKFYGKYKFQ) the chain is on the extracellular side. Residues 111–131 (IIAMTNWSIATATWLVFVICL) traverse the membrane as a helical segment. The Cytoplasmic portion of the chain corresponds to 132-154 (ERLIIIKYPLSVRKQAKFFTPRN). A helical transmembrane segment spans residues 155–175 (VVTIIVVTTFILTSYNHVSHA). Topologically, residues 176–222 (CAEKLFCNGTQYHVACLGIDSERWFRNEPNPNSEFMKSVVRVAPQVN) are extracellular. A glycan (N-linked (GlcNAc...) asparagine) is linked at asparagine 183. The chain crosses the membrane as a helical span at residues 223–243 (AIFVVLIPVVLVIIFNVMLIL). Residues 244–278 (TLRQRTKLFEPSKTIRGDSQFTQLQSKTEHKVTIT) are Cytoplasmic-facing. Residues 279–299 (VTAIVTCFTITQSPSAFVTFL) form a helical membrane-spanning segment. Residues 300-309 (SSYVHRDWVT) lie on the Extracellular side of the membrane. A helical transmembrane segment spans residues 310–330 (LSAICTILVVLGKALNFVLFC). At 331–428 (LSSASFRQRL…KEFRRGTSFV (98 aa)) the chain is on the cytoplasmic side.

The protein belongs to the G-protein coupled receptor 1 family.

It localises to the cell membrane. The protein is Putative G-protein coupled receptor F59B2.13 of Caenorhabditis elegans.